A 57-amino-acid polypeptide reads, in one-letter code: uncharacterized protein (57 aa).

A helical transmembrane segment spans residues 15 to 37 (GLAGLICIGLTISSGFSGSSILI).

It is found in the membrane. This is an uncharacterized protein from Dictyostelium discoideum (Social amoeba).